Here is a 252-residue protein sequence, read N- to C-terminus: 5'-nucleotidase SurE (252 aa).

4 residues coordinate a divalent metal cation: D8, D9, S40, and N92.

This sequence belongs to the SurE nucleotidase family. A divalent metal cation serves as cofactor.

The protein localises to the cytoplasm. It carries out the reaction a ribonucleoside 5'-phosphate + H2O = a ribonucleoside + phosphate. Functionally, nucleotidase that shows phosphatase activity on nucleoside 5'-monophosphates. The polypeptide is 5'-nucleotidase SurE (Chelativorans sp. (strain BNC1)).